The following is a 127-amino-acid chain: E3 ubiquitin-protein ligase PPP1R11 (127 aa).

Disordered stretches follow at residues 1–55 and 70–127; these read MAEA…EHMG and AFGE…PMQH. Alanine 2 is subject to N-acetylalanine. The segment covering 11-23 has biased composition (low complexity); the sequence is ETVTETTVTVTTE. Positions 40–55 are enriched in basic and acidic residues; the sequence is KKVEWSSDTVDNEHMG. Positions 53-63 are atypical RING finger domain 1; sequence HMGRRSSKCCC. Serine 74 and serine 75 each carry phosphoserine. Threonine 76 is modified (phosphothreonine). Position 78 is a phosphoserine (serine 78). Residues 86–95 form an atypical RING finger domain 2 region; that stretch reads CGHTHCVRGH. Over residues 90 to 100 the composition is skewed to basic residues; that stretch reads HCVRGHRKGRR. A compositionally biased stretch (pro residues) spans 103–127; it reads TPGPTPTTPPQPPDPSQPPPGPMQH. Position 110 is a phosphothreonine (threonine 110).

Interacts with TLR2 and UBE2D2. Auto-ubiquitinated.

The enzyme catalyses S-ubiquitinyl-[E2 ubiquitin-conjugating enzyme]-L-cysteine + [acceptor protein]-L-lysine = [E2 ubiquitin-conjugating enzyme]-L-cysteine + N(6)-ubiquitinyl-[acceptor protein]-L-lysine.. It participates in protein modification; protein ubiquitination. In terms of biological role, atypical E3 ubiquitin-protein ligase which ubiquitinates TLR2 at 'Lys-754' leading to its degradation by the proteasome. Plays a role in regulating inflammatory cytokine release and gram-positive bacterial clearance by functioning, in part, through the ubiquitination and degradation of TLR2. Inhibitor of protein phosphatase 1. The protein is E3 ubiquitin-protein ligase PPP1R11 (Ppp1r11) of Rattus norvegicus (Rat).